The primary structure comprises 215 residues: NAD(P)H-quinone oxidoreductase subunit I (215 aa).

4Fe-4S ferredoxin-type domains are found at residues 55 to 84 and 95 to 124; these read GRIH…VDWV and RNYS…MTEE. Residues C64, C67, C70, C74, C104, C107, C110, and C114 each contribute to the [4Fe-4S] cluster site. Residues 166-215 form a disordered region; the sequence is AGEMDPHGVPNDRPRAGQLPSQVLETLAPPAKVGAKNEGQSTGTTQEGEA. Residues 169–180 show a composition bias toward basic and acidic residues; that stretch reads MDPHGVPNDRPR. A compositionally biased stretch (polar residues) spans 203–215; it reads EGQSTGTTQEGEA.

Belongs to the complex I 23 kDa subunit family. As to quaternary structure, NDH-1 is composed of at least 11 different subunits. [4Fe-4S] cluster is required as a cofactor.

The protein localises to the cellular thylakoid membrane. The catalysed reaction is a plastoquinone + NADH + (n+1) H(+)(in) = a plastoquinol + NAD(+) + n H(+)(out). The enzyme catalyses a plastoquinone + NADPH + (n+1) H(+)(in) = a plastoquinol + NADP(+) + n H(+)(out). In terms of biological role, NDH-1 shuttles electrons from an unknown electron donor, via FMN and iron-sulfur (Fe-S) centers, to quinones in the respiratory and/or the photosynthetic chain. The immediate electron acceptor for the enzyme in this species is believed to be plastoquinone. Couples the redox reaction to proton translocation, and thus conserves the redox energy in a proton gradient. The polypeptide is NAD(P)H-quinone oxidoreductase subunit I (Parasynechococcus marenigrum (strain WH8102)).